The chain runs to 343 residues: 4-hydroxy-2-oxovalerate aldolase 2 (343 aa).

The 251-residue stretch at 5–255 (ITIVDTTLRD…DTGVDLFPLI (251 aa)) folds into the Pyruvate carboxyltransferase domain. Substrate is bound by residues 13-14 (RD), S167, and H194. D14 contributes to the Mn(2+) binding site. Mn(2+) contacts are provided by H194 and H196. Y285 contributes to the substrate binding site.

It belongs to the 4-hydroxy-2-oxovalerate aldolase family.

It catalyses the reaction (S)-4-hydroxy-2-oxopentanoate = acetaldehyde + pyruvate. In Rhodococcus jostii (strain RHA1), this protein is 4-hydroxy-2-oxovalerate aldolase 2.